We begin with the raw amino-acid sequence, 163 residues long: Phosphopantetheine adenylyltransferase (163 aa).

T10 contributes to the substrate binding site. Residues 10 to 11 and H18 each bind ATP; that span reads TF. Substrate-binding residues include K42, L74, and R88. Residues 89-91, E99, and 124-130 contribute to the ATP site; these read GLR and NSFISST.

This sequence belongs to the bacterial CoaD family. As to quaternary structure, homohexamer. It depends on Mg(2+) as a cofactor.

The protein resides in the cytoplasm. It catalyses the reaction (R)-4'-phosphopantetheine + ATP + H(+) = 3'-dephospho-CoA + diphosphate. It participates in cofactor biosynthesis; coenzyme A biosynthesis; CoA from (R)-pantothenate: step 4/5. Functionally, reversibly transfers an adenylyl group from ATP to 4'-phosphopantetheine, yielding dephospho-CoA (dPCoA) and pyrophosphate. The sequence is that of Phosphopantetheine adenylyltransferase from Shewanella baltica (strain OS223).